We begin with the raw amino-acid sequence, 77 residues long: Large ribosomal subunit protein uL29 (77 aa).

The protein belongs to the universal ribosomal protein uL29 family.

The chain is Large ribosomal subunit protein uL29 from Cutibacterium acnes (strain DSM 16379 / KPA171202) (Propionibacterium acnes).